The sequence spans 579 residues: General transcriptional corepressor tupA (579 aa).

The span at 83–101 shows a compositional bias: polar residues; sequence NINASQRDLNSPSTFRSNS. Residues 83-258 form a disordered region; the sequence is NINASQRDLN…ENGKEKGTDW (176 aa). 3 stretches are compositionally biased toward low complexity: residues 109–128, 157–198, and 207–224; these read NNNN…NNNN, QQPG…LSPL, and MGNN…NNNN. The segment covering 227 to 256 has biased composition (basic and acidic residues); the sequence is KKPDMEEVKEEDRRRHDTEMSEENGKEKGT. WD repeat units lie at residues 279 to 319, 325 to 364, 367 to 406, 413 to 452, 455 to 494, 501 to 540, and 543 to 579; these read QHNS…HAFV, DGDL…IQHT, GHEL…CAFT, GPKN…FLER, GHLD…SRSR, GHKD…THMM, and GHKN…KYDS.

Belongs to the WD repeat TUP1 family. As to quaternary structure, associates with trfA to form the trfA-tupA corepressor complex.

Its subcellular location is the nucleus. Its function is as follows. Acts as a component of the trfA-tupA corepressor complex which is involved in the repression of many genes in a wide variety of physiological processes. May also be involved in the derepression of at least some target genes. The complex is recruited to target genes by interaction with DNA-bound transcriptional repressors. The complex recruits histone deacetylases to produce a repressive chromatin structure, interacts with hypoacetylated N-terminal tails of histones H3 and H4 that have been programmed for repression by the action of histone deacetylases and interferes directly with the transcriptional machinery by associating with the RNA polymerase II mediator complex. This chain is General transcriptional corepressor tupA (tupA), found in Dictyostelium discoideum (Social amoeba).